The sequence spans 252 residues: 14-3-3 protein homolog 1 (252 aa).

It belongs to the 14-3-3 family.

The polypeptide is 14-3-3 protein homolog 1 (Schistosoma mansoni (Blood fluke)).